Reading from the N-terminus, the 895-residue chain is uncharacterized protein (895 aa).

Asn-2–Leu-19 is an NAD(+) binding site. Residue Cys-261 is part of the active site. The DOD-type homing endonuclease domain maps to Leu-468–Ile-614.

The protein belongs to the UDP-glucose/GDP-mannose dehydrogenase family. Post-translationally, this protein undergoes a protein self splicing that involves a post-translational excision of the intervening region (intein) followed by peptide ligation.

This is an uncharacterized protein from Methanocaldococcus jannaschii (strain ATCC 43067 / DSM 2661 / JAL-1 / JCM 10045 / NBRC 100440) (Methanococcus jannaschii).